Consider the following 412-residue polypeptide: 1-deoxy-D-xylulose 5-phosphate reductoisomerase (412 aa).

8 residues coordinate NADPH: Thr-10, Gly-11, Ser-12, Ile-13, Gly-36, Lys-37, Asn-38, and Asn-130. Lys-131 lines the 1-deoxy-D-xylulose 5-phosphate pocket. Position 132 (Glu-132) interacts with NADPH. Asp-156 lines the Mn(2+) pocket. 1-deoxy-D-xylulose 5-phosphate is bound by residues Ser-157, Glu-158, Ser-194, and His-217. Glu-158 contributes to the Mn(2+) binding site. An NADPH-binding site is contributed by Gly-223. Residues Ser-230, Asn-235, Lys-236, and Glu-239 each coordinate 1-deoxy-D-xylulose 5-phosphate. Glu-239 lines the Mn(2+) pocket.

Belongs to the DXR family. The cofactor is Mg(2+). Requires Mn(2+) as cofactor.

The catalysed reaction is 2-C-methyl-D-erythritol 4-phosphate + NADP(+) = 1-deoxy-D-xylulose 5-phosphate + NADPH + H(+). It participates in isoprenoid biosynthesis; isopentenyl diphosphate biosynthesis via DXP pathway; isopentenyl diphosphate from 1-deoxy-D-xylulose 5-phosphate: step 1/6. In terms of biological role, catalyzes the NADPH-dependent rearrangement and reduction of 1-deoxy-D-xylulose-5-phosphate (DXP) to 2-C-methyl-D-erythritol 4-phosphate (MEP). The protein is 1-deoxy-D-xylulose 5-phosphate reductoisomerase of Prochlorococcus marinus (strain NATL2A).